The sequence spans 263 residues: 4-hydroxy-tetrahydrodipicolinate reductase (263 aa).

Residues 7 to 12 (GFKGRM), 96 to 98 (GTT), and 122 to 125 (APNF) contribute to the NAD(+) site. His-152 (proton donor/acceptor) is an active-site residue. (S)-2,3,4,5-tetrahydrodipicolinate is bound at residue His-153. The Proton donor role is filled by Lys-156. 162–163 (GT) is a (S)-2,3,4,5-tetrahydrodipicolinate binding site.

This sequence belongs to the DapB family.

It is found in the cytoplasm. It catalyses the reaction (S)-2,3,4,5-tetrahydrodipicolinate + NAD(+) + H2O = (2S,4S)-4-hydroxy-2,3,4,5-tetrahydrodipicolinate + NADH + H(+). It carries out the reaction (S)-2,3,4,5-tetrahydrodipicolinate + NADP(+) + H2O = (2S,4S)-4-hydroxy-2,3,4,5-tetrahydrodipicolinate + NADPH + H(+). The protein operates within amino-acid biosynthesis; L-lysine biosynthesis via DAP pathway; (S)-tetrahydrodipicolinate from L-aspartate: step 4/4. Functionally, catalyzes the conversion of 4-hydroxy-tetrahydrodipicolinate (HTPA) to tetrahydrodipicolinate. In Listeria monocytogenes serotype 4b (strain CLIP80459), this protein is 4-hydroxy-tetrahydrodipicolinate reductase.